The primary structure comprises 514 residues: FAD-dependent monooxygenase AacuC (514 aa).

The disordered stretch occupies residues 1-29; it reads MVSNEYLTHGDKDEFDPAKWSSTPGELPP. Over residues 8-17 the composition is skewed to basic and acidic residues; it reads THGDKDEFDP. FAD is bound by residues Val79 and Arg146. The active site involves Arg227. The FAD site is built by Asp358 and Gly371.

It belongs to the paxM FAD-dependent monooxygenase family. The cofactor is FAD.

It participates in secondary metabolite biosynthesis. Functionally, FAD-dependent monooxygenase; part of the gene cluster that mediates the biosynthesis of the tetrahydroxanthone dimer secalonic acid D. The pathway begins with the synthesis of atrochrysone thioester by the polyketide synthase AacuL. The atrochrysone carboxyl ACP thioesterase AacuM then breaks the thioester bond and releases the atrochrysone carboxylic acid from AacuL. Atrochrysone carboxylic acid is decarboxylated by the decarboxylase AacuI, and oxidized by the anthrone oxygenase AacuG to yield emodin. Emodin is then reduced to emodin hydroquinone by a yet unidentified oxidoreductase. A-ring reduction by the short chain dehydrogenase AacuN, dehydration by the scytalone dehydratase-like protein AacuK and probable spontaneous re-oxidation, results in overall deoxygenation to chrysophanol. Baeyer-Villiger oxidation by the Baeyer-Villiger monooxygenase (BVMO) AacuH then yields monodictyphenone. Monodictyphenone is transformed into compounds with the tetrahydroxanthone skeleton via methylesterification by the methyltransferase AacuQ, followed by the action of the flavin-dependent monooxygenase AacuC, the isomerase AacuP, and the short chain dehydrogenase/reductase AacuF or AacuD. AacuF and AacuD should accept the same compound as a substrate but perform the ketoreduction with a different stereoselectivity, thus yielding blennolides B and A, respectively. In the final step of the biosynthesis, the cytochrome P450 monooxygenase AacuE accepts blennolide B and/or blennolide A to conduct the dimerization reaction to furnish the tetrahydroxanthone dimers, secalonic acids D, B, and F. The sequence is that of FAD-dependent monooxygenase AacuC from Aspergillus aculeatus (strain ATCC 16872 / CBS 172.66 / WB 5094).